The following is a 115-amino-acid chain: U3-lycotoxin-Ls1f (115 aa).

The signal sequence occupies residues 1–20 (MKFVLLFGVLLVTLFSYSSA). The propeptide occupies 21 to 44 (EMLDDFDQADEDELLSLIEKEEAR). Cystine bridges form between Cys48/Cys63, Cys55/Cys72, Cys62/Cys87, and Cys74/Cys85.

Belongs to the neurotoxin 19 (CSTX) family. 01 subfamily. As to expression, expressed by the venom gland.

The protein localises to the secreted. This Lycosa singoriensis (Wolf spider) protein is U3-lycotoxin-Ls1f.